The following is a 458-amino-acid chain: tRNA modification GTPase MnmE (458 aa).

Residues R22, E84, and R123 each coordinate (6S)-5-formyl-5,6,7,8-tetrahydrofolate. Residues 220–379 enclose the TrmE-type G domain; the sequence is GIATAIIGRP…LEKAIADLFF (160 aa). N230 lines the K(+) pocket. Residues 230–235, 249–255, and 274–277 contribute to the GTP site; these read NVGKSS, TDIAGTT, and DTAG. S234 serves as a coordination point for Mg(2+). T249, I251, and T254 together coordinate K(+). Mg(2+) is bound at residue T255. K458 serves as a coordination point for (6S)-5-formyl-5,6,7,8-tetrahydrofolate.

The protein belongs to the TRAFAC class TrmE-Era-EngA-EngB-Septin-like GTPase superfamily. TrmE GTPase family. In terms of assembly, homodimer. Heterotetramer of two MnmE and two MnmG subunits. Requires K(+) as cofactor.

Its subcellular location is the cytoplasm. In terms of biological role, exhibits a very high intrinsic GTPase hydrolysis rate. Involved in the addition of a carboxymethylaminomethyl (cmnm) group at the wobble position (U34) of certain tRNAs, forming tRNA-cmnm(5)s(2)U34. This chain is tRNA modification GTPase MnmE, found in Bacillus thuringiensis (strain Al Hakam).